A 198-amino-acid polypeptide reads, in one-letter code: Probable GTP-binding protein EngB (198 aa).

Positions 22–195 (NIPEVALAGR…LEVIGRWVGL (174 aa)) constitute an EngB-type G domain. GTP contacts are provided by residues 30–37 (GRSNVGKS), 57–61 (GRTRL), 75–78 (DLPG), 142–145 (TKAD), and 174–176 (FSA). Residues Ser-37 and Thr-59 each coordinate Mg(2+).

This sequence belongs to the TRAFAC class TrmE-Era-EngA-EngB-Septin-like GTPase superfamily. EngB GTPase family. Mg(2+) serves as cofactor.

Functionally, necessary for normal cell division and for the maintenance of normal septation. The protein is Probable GTP-binding protein EngB of Pelotomaculum thermopropionicum (strain DSM 13744 / JCM 10971 / SI).